A 117-amino-acid polypeptide reads, in one-letter code: Aspartate 1-decarboxylase (117 aa).

Ser-25 functions as the Schiff-base intermediate with substrate; via pyruvic acid in the catalytic mechanism. Position 25 is a pyruvic acid (Ser) (Ser-25). Thr-57 is a substrate binding site. The active-site Proton donor is the Tyr-58. 73 to 75 (GAA) provides a ligand contact to substrate.

This sequence belongs to the PanD family. Heterooctamer of four alpha and four beta subunits. Pyruvate is required as a cofactor. Is synthesized initially as an inactive proenzyme, which is activated by self-cleavage at a specific serine bond to produce a beta-subunit with a hydroxyl group at its C-terminus and an alpha-subunit with a pyruvoyl group at its N-terminus.

It is found in the cytoplasm. It catalyses the reaction L-aspartate + H(+) = beta-alanine + CO2. The protein operates within cofactor biosynthesis; (R)-pantothenate biosynthesis; beta-alanine from L-aspartate: step 1/1. Functionally, catalyzes the pyruvoyl-dependent decarboxylation of aspartate to produce beta-alanine. The protein is Aspartate 1-decarboxylase of Bacteroides thetaiotaomicron (strain ATCC 29148 / DSM 2079 / JCM 5827 / CCUG 10774 / NCTC 10582 / VPI-5482 / E50).